The chain runs to 305 residues: UPF0450 protein C17orf58 homolog (305 aa).

The first 22 residues, 1–22, serve as a signal peptide directing secretion; that stretch reads MTARALWLLCLIVGWSPEAPVA. Positions 18–160 are disordered; sequence EAPVAERKAP…DREPETQSCA (143 aa). Positions 21 to 39 are enriched in basic and acidic residues; it reads VAERKAPPPHRKPDSRETP. 3 disulfide bridges follow: cysteine 159/cysteine 233, cysteine 163/cysteine 237, and cysteine 174/cysteine 304. Residues 159–304 form the NTR domain; it reads CARACSADAD…QVRGATHTQC (146 aa).

The protein belongs to the UPF0450 family.

In Mus musculus (Mouse), this protein is UPF0450 protein C17orf58 homolog.